The sequence spans 97 residues: Cell division topological specificity factor (97 aa).

It belongs to the MinE family.

Functionally, prevents the cell division inhibition by proteins MinC and MinD at internal division sites while permitting inhibition at polar sites. This ensures cell division at the proper site by restricting the formation of a division septum at the midpoint of the long axis of the cell. The polypeptide is Cell division topological specificity factor (Synechococcus sp. (strain RCC307)).